Reading from the N-terminus, the 464-residue chain is Nuclear distribution protein nudF 2 (464 aa).

The LisH domain occupies 9 to 41 (QAAELNKSIIAYLSAHGLAETLAAFRKESDFPD). Residues 63–88 (NSTLMKKLLALESHNKALRNELNSTR) adopt a coiled-coil conformation. WD repeat units lie at residues 112–151 (SHRD…LERT), 154–195 (GHTM…KNVK), 199–238 (GHDH…RVKT), 241–280 (DHTG…PICK), 285–343 (GHEN…MTLT), 344–383 (GHAS…RCVK), 388–424 (AHDG…AELP), and 426–464 (SKLD…RSHK).

It belongs to the WD repeat LIS1/nudF family. In terms of assembly, self-associates. Interacts with nudE and dynein.

The protein localises to the cytoplasm. Its subcellular location is the cytoskeleton. It localises to the spindle pole. In terms of biological role, positively regulates the activity of the minus-end directed microtubule motor protein dynein. May enhance dynein-mediated microtubule sliding by targeting dynein to the microtubule plus end. Required for nuclear migration during vegetative growth as well as development. Required for retrograde early endosome (EE) transport from the hyphal tip. Required for localization of dynein to the mitotic spindle poles. Recruits additional proteins to the dynein complex at SPBs. The sequence is that of Nuclear distribution protein nudF 2 from Penicillium rubens (strain ATCC 28089 / DSM 1075 / NRRL 1951 / Wisconsin 54-1255) (Penicillium chrysogenum).